A 352-amino-acid chain; its full sequence is MGLYKTKSKRSIANYHHIIIINIFILSSITSSSMASSSSPSSIDFSTAILIRVDQSGKGDFSKIQEAIESIPPNLNNSQLYFIWVKPGIYREKVVIPAEKPYITLSGTQASNTFLIWSDGEDILESPTLTIFASDFVCRFLTIQNKFGTAGRAVALRVAADKAAFYGCVITSYQDTLLDDNGNHYFKNCYIEGATDFICGSASSLYERCHLHSLSPNNGSITAQMRTSATEKSGFTFLGCKLTGSGSTFLGRPWGAYSRVVFAYSFFSNVVAPQGWNQWGDSTKENTVYYGEYKCYGPGADREQRVEWSKQLSDEEATVFLSKDFIGGKDWLRPAPSHFKNAPKQTQNKEIN.

A helical transmembrane segment spans residues 13–35; that stretch reads ANYHHIIIINIFILSSITSSSMA. An N-linked (GlcNAc...) asparagine glycan is attached at asparagine 76. Catalysis depends on aspartate 175, which acts as the Proton donor. Residue aspartate 196 is the Nucleophile of the active site. A glycan (N-linked (GlcNAc...) asparagine) is linked at asparagine 218. Substrate-binding residues include arginine 252 and tryptophan 254. Residues 332-352 form a disordered region; it reads LRPAPSHFKNAPKQTQNKEIN. Positions 343-352 are enriched in polar residues; it reads PKQTQNKEIN.

The protein belongs to the pectinesterase family.

The protein localises to the membrane. The enzyme catalyses [(1-&gt;4)-alpha-D-galacturonosyl methyl ester](n) + n H2O = [(1-&gt;4)-alpha-D-galacturonosyl](n) + n methanol + n H(+). The protein operates within glycan metabolism; pectin degradation; 2-dehydro-3-deoxy-D-gluconate from pectin: step 1/5. Acts in the modification of cell walls via demethylesterification of cell wall pectin. The protein is Putative pectinesterase 11 (PME11) of Arabidopsis thaliana (Mouse-ear cress).